A 141-amino-acid chain; its full sequence is Fluoride-specific ion channel FluC 1 (141 aa).

Helical transmembrane passes span 12–32 (LYALIAAGSVIGGCARYLVGV), 44–64 (WATLFVNVTGSFVIGFYAAIA), 79–99 (FVMTGICGGYTTFSGFSLETF), and 107–127 (ALAALINLGVSPMSWLVAVWL). Na(+) contacts are provided by Gly-86 and Thr-89.

This sequence belongs to the fluoride channel Fluc/FEX (TC 1.A.43) family.

It localises to the cell inner membrane. The enzyme catalyses fluoride(in) = fluoride(out). Na(+) is not transported, but it plays an essential structural role and its presence is essential for fluoride channel function. In terms of biological role, fluoride-specific ion channel. Important for reducing fluoride concentration in the cell, thus reducing its toxicity. The chain is Fluoride-specific ion channel FluC 1 from Rhodopseudomonas palustris (strain BisB18).